Reading from the N-terminus, the 262-residue chain is RNA polymerase sigma-B factor (262 aa).

The Polymerase core binding signature appears at 58-71; the sequence is DLRQVGMIGLLGAI. Residues 224–243 constitute a DNA-binding region (H-T-H motif); the sequence is QKETGDILGISQMHVSRLQR.

The protein belongs to the sigma-70 factor family. SigB subfamily. As to quaternary structure, interacts transiently with the RNAP core.

In terms of biological role, sigma factors are initiation factors that promote the attachment of RNA polymerase (RNAP) to specific initiation sites and are then released. Sigma B is not essential for sporulation; rather it is required for maximal expression of ctc and csbA which are transcribed in the early stationary phase under conditions inimical to sporulation. May play a role in the ability of the bacterium to adapt to various stresses but is not essential for its survival under these conditions. Positively regulates expression of its own operon. The second most abundant sigma factor, it associates with RNAP core under all growth phases. The polypeptide is RNA polymerase sigma-B factor (sigB) (Bacillus subtilis (strain 168)).